We begin with the raw amino-acid sequence, 156 residues long: CKLF-like MARVEL transmembrane domain-containing protein 5 (156 aa).

Residues 29-146 (FLSSLKGILL…DAFKIYRTEL (118 aa)) enclose the MARVEL domain. A run of 4 helical transmembrane segments spans residues 35-55 (GILL…FTAS), 56-76 (ISAY…FLFL), 93-113 (LDFL…FAAV), and 119-139 (AAIA…YDAF).

The protein belongs to the chemokine-like factor family.

It is found in the membrane. This chain is CKLF-like MARVEL transmembrane domain-containing protein 5 (Cmtm5), found in Mus musculus (Mouse).